Here is a 236-residue protein sequence, read N- to C-terminus: Lipid A 4'-phosphatase (236 aa).

5 consecutive transmembrane segments (helical) span residues 26–46 (FFYLISAKWTWVIMSIAFLFF), 58–78 (FIVGAVLLSVLICDQLSSSFF), 134–153 (YTWTIWSVVALVIYSRIYIG), 160–182 (IIPGIAVGLIVGHFVYKVYLYAR), and 200–220 (GDSIRLWTLSLIGFVFAMLCM).

Belongs to the lipid A LpxF 4'-phosphatase family.

The protein resides in the cell inner membrane. It participates in bacterial outer membrane biogenesis; LPS lipid A biosynthesis. Its function is as follows. Removes the 4'-phosphate group from lipid A species. Absence of phosphate groups in lipid A renders the bacteria resistant to host-derived cationic antimicrobial peptides (CAMP) and allows it to camouflage itself from the host innate immune response. Removal of the 4'-phosphate may be required to generate the substrate for deacylation of the pentaacyl lipid A to the tetraccylated lipid A species. The sequence is that of Lipid A 4'-phosphatase from Porphyromonas gingivalis (strain ATCC 33277 / DSM 20709 / CIP 103683 / JCM 12257 / NCTC 11834 / 2561).